Here is a 149-residue protein sequence, read N- to C-terminus: L-alanine exporter AlaE (149 aa).

The next 4 membrane-spanning stretches (helical) occupy residues 17–37, 43–63, 86–106, and 111–131; these read FAMV…ISGM, LASR…YGVF, LTAY…TVGA, and IITA…FYGY.

It belongs to the AlaE exporter family.

It localises to the cell inner membrane. In terms of biological role, exports L-alanine. The polypeptide is L-alanine exporter AlaE (Aliivibrio salmonicida (strain LFI1238) (Vibrio salmonicida (strain LFI1238))).